The sequence spans 149 residues: Arginine repressor (149 aa).

It belongs to the ArgR family.

It localises to the cytoplasm. It participates in amino-acid biosynthesis; L-arginine biosynthesis [regulation]. Its function is as follows. Regulates arginine biosynthesis genes. The protein is Arginine repressor of Listeria monocytogenes serotype 4b (strain F2365).